Here is a 163-residue protein sequence, read N- to C-terminus: Glyoxalase domain-containing protein 5 (163 aa).

One can recognise a VOC domain in the interval 41-161 (HLDHLVLTVR…DDNLIEVSNY (121 aa)).

Belongs to the glyoxalase I family.

This is Glyoxalase domain-containing protein 5 (glod5) from Danio rerio (Zebrafish).